The sequence spans 149 residues: SsrA-binding protein (149 aa).

The protein belongs to the SmpB family.

It is found in the cytoplasm. Required for rescue of stalled ribosomes mediated by trans-translation. Binds to transfer-messenger RNA (tmRNA), required for stable association of tmRNA with ribosomes. tmRNA and SmpB together mimic tRNA shape, replacing the anticodon stem-loop with SmpB. tmRNA is encoded by the ssrA gene; the 2 termini fold to resemble tRNA(Ala) and it encodes a 'tag peptide', a short internal open reading frame. During trans-translation Ala-aminoacylated tmRNA acts like a tRNA, entering the A-site of stalled ribosomes, displacing the stalled mRNA. The ribosome then switches to translate the ORF on the tmRNA; the nascent peptide is terminated with the 'tag peptide' encoded by the tmRNA and targeted for degradation. The ribosome is freed to recommence translation, which seems to be the essential function of trans-translation. The polypeptide is SsrA-binding protein (Fervidobacterium nodosum (strain ATCC 35602 / DSM 5306 / Rt17-B1)).